Here is a 390-residue protein sequence, read N- to C-terminus: Phosphoprotein (390 aa).

2 positions are modified to phosphothreonine: Thr10 and Thr16. Residues 54-65 show a composition bias toward polar residues; sequence QKNIQHPTASHQ. Disordered stretches follow at residues 54–98 and 144–183; these read QKNI…EPLF and RTST…KERS. Ser69 carries the post-translational modification Phosphoserine. Phosphothreonine is present on residues Thr91, Thr150, and Thr164. Ser187 is modified (phosphoserine). Residue Thr249 is modified to Phosphothreonine. The residue at position 256 (Ser256) is a Phosphoserine. Residues Thr257 and Thr281 each carry the phosphothreonine modification. Residues Ser291 and Ser293 each carry the phosphoserine modification. The residue at position 297 (Thr297) is a Phosphothreonine. Phosphoserine occurs at positions 300 and 373. The segment at 342-390 is interaction with the nucleoprotein; that stretch reads AGRKVMITKMITDCVANPQMKQAFEQRLAKASTEDALNDIKKDIIRSAI. Thr374 carries the post-translational modification Phosphothreonine.

It belongs to the rubulavirus/avulavirus P protein family. In terms of assembly, homotetramer. Interacts (via multimerization domain) with polymerase L; this interaction forms the polymerase L-P complex. Interacts (via N-terminus) with N0 (via Ncore); this interaction allows P to chaperon N0 to avoid N polymerization before encapsidation. Interacts (via C-terminus) with N-RNA template; this interaction positions the polymerase on the template for both transcription and replication. Interacts with host RPS6KB1 kinase; this interaction may play a role in the viral replication and transcription.

Essential cofactor of the RNA polymerase L that plays a central role in the transcription and replication by forming the polymerase complex with RNA polymerase L and recruiting L to the genomic N-RNA template for RNA synthesis. Also plays a central role in the encapsidation of nascent RNA chains by forming the encapsidation complex with the nucleocapsid protein N (N-P complex). Acts as a chaperone for newly synthesized free N protein, so-called N0, allowing encapsidation of nascent RNA chains during replication. The nucleoprotein protein N prevents excessive phosphorylation of P, which leads to down-regulation of viral transcription/ replication. Participates, together with N, in the formation of viral factories (viroplasms), which are large inclusions in the host cytoplasm where replication takes place. The chain is Phosphoprotein (P/V) from Homo sapiens (Human).